A 366-amino-acid chain; its full sequence is Cobalt-precorrin-5B C(1)-methyltransferase (366 aa).

It belongs to the CbiD family.

The enzyme catalyses Co-precorrin-5B + S-adenosyl-L-methionine = Co-precorrin-6A + S-adenosyl-L-homocysteine. It participates in cofactor biosynthesis; adenosylcobalamin biosynthesis; cob(II)yrinate a,c-diamide from sirohydrochlorin (anaerobic route): step 6/10. In terms of biological role, catalyzes the methylation of C-1 in cobalt-precorrin-5B to form cobalt-precorrin-6A. This Pseudomonas aeruginosa (strain LESB58) protein is Cobalt-precorrin-5B C(1)-methyltransferase.